The primary structure comprises 188 residues: dCTP deaminase (188 aa).

DCTP-binding positions include 111-116, 135-137, Gln156, Tyr170, and Gln180; these read KSTYAR and TLE. Glu137 serves as the catalytic Proton donor/acceptor.

This sequence belongs to the dCTP deaminase family. Homotrimer.

It carries out the reaction dCTP + H2O + H(+) = dUTP + NH4(+). The protein operates within pyrimidine metabolism; dUMP biosynthesis; dUMP from dCTP (dUTP route): step 1/2. Functionally, catalyzes the deamination of dCTP to dUTP. The chain is dCTP deaminase from Neisseria meningitidis serogroup B (strain ATCC BAA-335 / MC58).